We begin with the raw amino-acid sequence, 503 residues long: Probable cytochrome P450 6a19 (503 aa).

Position 445 (C445) interacts with heme.

Belongs to the cytochrome P450 family. It depends on heme as a cofactor.

Its subcellular location is the endoplasmic reticulum membrane. It is found in the microsome membrane. Functionally, may be involved in the metabolism of insect hormones and in the breakdown of synthetic insecticides. This Drosophila melanogaster (Fruit fly) protein is Probable cytochrome P450 6a19 (Cyp6a19).